The sequence spans 309 residues: tRNA-dihydrouridine(16) synthase (309 aa).

FMN contacts are provided by residues 7 to 9 (PME) and glutamine 68. The active-site Proton donor is cysteine 98. Residues arginine 137, asparagine 198, and 220–221 (GC) contribute to the FMN site.

It belongs to the Dus family. DusC subfamily. FMN serves as cofactor.

It carries out the reaction 5,6-dihydrouridine(16) in tRNA + NADP(+) = uridine(16) in tRNA + NADPH + H(+). It catalyses the reaction 5,6-dihydrouridine(16) in tRNA + NAD(+) = uridine(16) in tRNA + NADH + H(+). In terms of biological role, catalyzes the synthesis of 5,6-dihydrouridine (D), a modified base found in the D-loop of most tRNAs, via the reduction of the C5-C6 double bond in target uridines. Specifically modifies U16 in tRNAs. This is tRNA-dihydrouridine(16) synthase from Azotobacter vinelandii.